Reading from the N-terminus, the 172-residue chain is RNA silencing suppressor p19 (172 aa).

Basic and acidic residues predominate over residues 1-20 (MERVIQGNDAREQANGERWD). The segment at 1 to 37 (MERVIQGNDAREQANGERWDGGSGGTTSGFKLPDESP) is disordered.

The protein belongs to the tombusvirus protein p19 family. As to quaternary structure, homodimer.

Viral suppressor of RNA silencing which binds specifically to silencing RNAs (siRNAs). Acts as a molecular caliper to specifically select siRNAs based on the length of the duplex region of the RNA. The sequence is that of RNA silencing suppressor p19 from Cynara cardunculus var. scolymus (Globe artichoke).